Reading from the N-terminus, the 167-residue chain is CS6 fimbrial subunit B (167 aa).

Positions 1-21 (MLKKIIPAIVLIAGTSGVVNA) are cleaved as a signal peptide.

It localises to the fimbrium. In Escherichia coli, this protein is CS6 fimbrial subunit B (cssB).